We begin with the raw amino-acid sequence, 206 residues long: Imidazoleglycerol-phosphate dehydratase (206 aa).

Belongs to the imidazoleglycerol-phosphate dehydratase family.

The protein resides in the cytoplasm. The catalysed reaction is D-erythro-1-(imidazol-4-yl)glycerol 3-phosphate = 3-(imidazol-4-yl)-2-oxopropyl phosphate + H2O. It functions in the pathway amino-acid biosynthesis; L-histidine biosynthesis; L-histidine from 5-phospho-alpha-D-ribose 1-diphosphate: step 6/9. This Leptospira interrogans serogroup Icterohaemorrhagiae serovar copenhageni (strain Fiocruz L1-130) protein is Imidazoleglycerol-phosphate dehydratase.